The primary structure comprises 410 residues: 23S rRNA (uracil(747)-C(5))-methyltransferase (410 aa).

Cysteine 61, cysteine 67, cysteine 70, and cysteine 137 together coordinate [4Fe-4S] cluster. Glutamine 253, tyrosine 279, glutamate 300, and aspartate 341 together coordinate S-adenosyl-L-methionine. Cysteine 367 (nucleophile) is an active-site residue.

This sequence belongs to the class I-like SAM-binding methyltransferase superfamily. RNA M5U methyltransferase family.

It catalyses the reaction uridine(747) in 23S rRNA + S-adenosyl-L-methionine = 5-methyluridine(747) in 23S rRNA + S-adenosyl-L-homocysteine + H(+). Activated by magnesium ions. Functionally, catalyzes the formation of 5-methyl-uridine at position equivalent to 747 (m5U747) in 23S rRNA (m5U859 in the P.abyssi numbering). In Pyrococcus abyssi (strain GE5 / Orsay), this protein is 23S rRNA (uracil(747)-C(5))-methyltransferase.